A 154-amino-acid chain; its full sequence is MTHYEGDLRPTTARFVIIASRWNARITDALVTGARQSLAGNGIGEDAIDVVRVPGAWEIPMAANRVAQGGQHAAIIALGCVIRGDTRHYEHVADLCAEGLMSVQLQTGVPVLNGVLAVERVEDAEARAGGSHGNKGEECALAALELVNLMELLP.

Residues Trp22, 56-58 (AWE), and 80-82 (CVI) each bind 5-amino-6-(D-ribitylamino)uracil. 85–86 (DT) contributes to the (2S)-2-hydroxy-3-oxobutyl phosphate binding site. His88 functions as the Proton donor in the catalytic mechanism. Asn113 lines the 5-amino-6-(D-ribitylamino)uracil pocket. Arg127 is a (2S)-2-hydroxy-3-oxobutyl phosphate binding site.

This sequence belongs to the DMRL synthase family. In terms of assembly, forms an icosahedral capsid composed of 60 subunits, arranged as a dodecamer of pentamers.

The enzyme catalyses (2S)-2-hydroxy-3-oxobutyl phosphate + 5-amino-6-(D-ribitylamino)uracil = 6,7-dimethyl-8-(1-D-ribityl)lumazine + phosphate + 2 H2O + H(+). The protein operates within cofactor biosynthesis; riboflavin biosynthesis; riboflavin from 2-hydroxy-3-oxobutyl phosphate and 5-amino-6-(D-ribitylamino)uracil: step 1/2. Its function is as follows. Catalyzes the formation of 6,7-dimethyl-8-ribityllumazine by condensation of 5-amino-6-(D-ribitylamino)uracil with 3,4-dihydroxy-2-butanone 4-phosphate. This is the penultimate step in the biosynthesis of riboflavin. This chain is 6,7-dimethyl-8-ribityllumazine synthase, found in Xanthomonas campestris pv. campestris (strain 8004).